Here is a 493-residue protein sequence, read N- to C-terminus: Glutamyl-tRNA(Gln) amidotransferase subunit A (493 aa).

Catalysis depends on charge relay system residues K79 and S159. Residue S183 is the Acyl-ester intermediate of the active site.

It belongs to the amidase family. GatA subfamily. Heterotrimer of A, B and C subunits.

The enzyme catalyses L-glutamyl-tRNA(Gln) + L-glutamine + ATP + H2O = L-glutaminyl-tRNA(Gln) + L-glutamate + ADP + phosphate + H(+). Allows the formation of correctly charged Gln-tRNA(Gln) through the transamidation of misacylated Glu-tRNA(Gln) in organisms which lack glutaminyl-tRNA synthetase. The reaction takes place in the presence of glutamine and ATP through an activated gamma-phospho-Glu-tRNA(Gln). The polypeptide is Glutamyl-tRNA(Gln) amidotransferase subunit A (Brucella suis (strain ATCC 23445 / NCTC 10510)).